We begin with the raw amino-acid sequence, 204 residues long: Thymidylate kinase (204 aa).

9–16 (GIEASGKT) is a binding site for ATP.

The protein belongs to the thymidylate kinase family.

The enzyme catalyses dTMP + ATP = dTDP + ADP. Phosphorylation of dTMP to form dTDP in both de novo and salvage pathways of dTTP synthesis. This is Thymidylate kinase from Sulfurihydrogenibium sp. (strain YO3AOP1).